A 196-amino-acid chain; its full sequence is DnaA initiator-associating protein DiaA (196 aa).

One can recognise an SIS domain in the interval 34 to 196; that stretch reads LVQSLLNGNK…DNTLFPHQDD (163 aa).

Belongs to the SIS family. DiaA subfamily. In terms of assembly, homotetramer; dimer of dimers.

Functionally, required for the timely initiation of chromosomal replication via direct interactions with the DnaA initiator protein. The polypeptide is DnaA initiator-associating protein DiaA (Shigella boydii serotype 18 (strain CDC 3083-94 / BS512)).